A 125-amino-acid polypeptide reads, in one-letter code: Calcitonin receptor-stimulating peptide 2 (125 aa).

A signal peptide spans 1-25; it reads MGFWKFLPFLVLSFLVVYQAGMFQA. Positions 26–77 are excised as a propeptide; it reads APFRSALENDFDPAILTEKEMCLLLAAVMNDYVQMKTSELKQEAEHFHITAQ. A disulfide bridge connects residues Cys81 and Cys86.

This sequence belongs to the calcitonin family.

The protein localises to the secreted. The polypeptide is Calcitonin receptor-stimulating peptide 2 (CRSP2) (Capra hircus (Goat)).